Reading from the N-terminus, the 241-residue chain is Phycocyanobilin:ferredoxin oxidoreductase (241 aa).

Belongs to the HY2 family.

The enzyme catalyses (2R,3Z)-phycocyanobilin + 4 oxidized [2Fe-2S]-[ferredoxin] = biliverdin IXalpha + 4 reduced [2Fe-2S]-[ferredoxin] + 4 H(+). In terms of biological role, catalyzes the four-electron reduction of biliverdin IX-alpha (2-electron reduction at both the A and D rings); the reaction proceeds via an isolatable 2-electron intermediate, 181,182-dihydrobiliverdin. The protein is Phycocyanobilin:ferredoxin oxidoreductase of Prochlorococcus marinus (strain MIT 9515).